Reading from the N-terminus, the 411-residue chain is MATINDNYLKLKAGYLFPEIARRVNAFAQSNPEAAIIRLGIGDVTEPLPVACRQAMIQAVEDMGQRENFKGYGPEQGYAWLREKIAAHDFQSRGCEVDASEIFISDGSKCDCGNILDIFGNNNRIAVTDPVYPVYVDTNVMAGHTGDANDRGEYDGLVYLPISAENNFTAEIPSEKVDLIYLCFPNNPTGAVASREYLQAWVDYARANGAIILFDAAYEAFITDPAIPHSIFEIPGARDCAIEFRSFSKNAGFTGTRCAFTVVPKGLKGKAADGSEVELWGLWNRRQSTKFNGVSYIVQRGAEAVYSAEGQAQIKELVAFYLENARIIREELTAAGLDVHGGVNAPYVWVKTPAGLTSWDFFDKLLQVCNVVGTPGSGFGAAGEGYFRISAFNSRENVVTAMQRIRSAGLA.

Positions 15 and 42 each coordinate substrate. Residues tyrosine 72, 108–109, tyrosine 132, asparagine 187, tyrosine 218, and 246–248 contribute to the pyridoxal 5'-phosphate site; these read SK and SFS. Lysine 109, tyrosine 132, and asparagine 187 together coordinate substrate. Lysine 249 is modified (N6-(pyridoxal phosphate)lysine). Positions 257 and 292 each coordinate pyridoxal 5'-phosphate. Residues asparagine 292 and arginine 388 each coordinate substrate.

The protein belongs to the class-I pyridoxal-phosphate-dependent aminotransferase family. LL-diaminopimelate aminotransferase subfamily. As to quaternary structure, homodimer. Pyridoxal 5'-phosphate serves as cofactor.

The enzyme catalyses (2S,6S)-2,6-diaminopimelate + 2-oxoglutarate = (S)-2,3,4,5-tetrahydrodipicolinate + L-glutamate + H2O + H(+). The protein operates within amino-acid biosynthesis; L-lysine biosynthesis via DAP pathway; LL-2,6-diaminopimelate from (S)-tetrahydrodipicolinate (aminotransferase route): step 1/1. Its function is as follows. Involved in the synthesis of meso-diaminopimelate (m-DAP or DL-DAP), required for both lysine and peptidoglycan biosynthesis. Catalyzes the direct conversion of tetrahydrodipicolinate to LL-diaminopimelate. This is LL-diaminopimelate aminotransferase from Synechococcus elongatus (strain ATCC 33912 / PCC 7942 / FACHB-805) (Anacystis nidulans R2).